The primary structure comprises 437 residues: MSLILKFMLLILLVSSHHVRSGSIVKFLPGFKGPLPFELETGYIGIGEEENVQFFYYFIKSDKNPQEDPLIIWLNGGPGCSCLSGLFFENGPLALKNKVYNGSVPSLVSTTYSWTKTANIIFLDQPVGSGFSYSKTPIERTSDTSEVKKIHEFLQKWLIKHPQFLSNPFYVVGDSYSGMIVPALVHEISKGNYICCNPPINLQGYVLGNPITHIEFEQNFRIPYAHGMSLISDELYESLKRICKGNYFSVDPSNKKCLKLVEEYHKCTDNINSHHTLIANCDDSNTQHISPDCYYYPYHLVECWANNESVREALHVDKGSIGEWIRDHRGIPYKSDIRSSIPYHMNNSINGYRSLIFSGDHDITMPFQATQAWIKSLNYSIIDDWRPWMIKGQIAGYTRTYSNKMTFATVKGGGHTAEYLPEESSIMFQRWISGQPL.

Residues 1-21 (MSLILKFMLLILLVSSHHVRS) form the signal peptide. An N-linked (GlcNAc...) asparagine glycan is attached at N101. S175 is an active-site residue. 2 cysteine pairs are disulfide-bonded: C243/C257 and C281/C293. N307 and N346 each carry an N-linked (GlcNAc...) asparagine glycan. Residue D362 is part of the active site. Residue N378 is glycosylated (N-linked (GlcNAc...) asparagine). H415 is a catalytic residue.

Belongs to the peptidase S10 family. Expressed in seedlings, leaves, flowers and siliques.

It is found in the secreted. It catalyses the reaction 2 1-O-(trans-sinapoyl)-beta-D-glucose = 1,2-di-O-sinapoyl beta-D-glucose + D-glucose. In terms of biological role, catalyzes the formation of 1,2-bis-O-sinapoyl beta-D-glucoside and an unidentified compound 1. This is Serine carboxypeptidase-like 9 (SCPL9) from Arabidopsis thaliana (Mouse-ear cress).